The sequence spans 125 residues: MYNINRPISPHLTIYNTQKSSLFSIWHRISGVAMFTLIASPPLFLKLATFSYKSFNILDLMLNNSSLILPWFIVIISVIFLYHIINGIRHFLWDSVVNVNTESIIKDSNTLLALVFLIMLFKFIL.

3 helical membrane passes run 29–49, 68–88, and 104–124; these read ISGV…KLAT, ILPW…INGI, and IIKD…FKFI. Heme is bound at residue His-83.

It belongs to the cytochrome b560 family. In terms of assembly, forms part of complex II containing four subunits: a 70 kDa flavoprotein (FP), a 27 kDa iron-sulfur protein (IP), a cytochrome B and a membrane-anchoring protein. It depends on heme as a cofactor.

It localises to the mitochondrion inner membrane. Its pathway is carbohydrate metabolism; tricarboxylic acid cycle. Its function is as follows. Membrane-anchoring subunit of succinate dehydrogenase (SDH) that is involved in complex II of the mitochondrial electron transport chain and is responsible for transferring electrons from succinate to ubiquinone (coenzyme Q). The chain is Succinate dehydrogenase cytochrome b560 subunit (SDH3) from Porphyra purpurea (Red seaweed).